We begin with the raw amino-acid sequence, 95 residues long: Toxin Tbo-IT2 (95 aa).

Positions 1–23 are cleaved as a signal peptide; the sequence is MTMKTLCLSLIVIGVLILVAVKA. Residues 24-53 constitute a propeptide that is removed on maturation; the sequence is EDYVNINSLEEAPEENVNINNLEETPEESR. Cystine bridges form between C54–C68, C61–C73, C67–C84, C70–C92, and C75–C82. Residue C92 is modified to Cysteine amide.

The protein belongs to the neurotoxin 02 (plectoxin) family. 02 (plectoxin) subfamily. In terms of tissue distribution, expressed by the venom gland.

The protein localises to the secreted. Functionally, this recombinant (non-amidated) toxin shows insecticidal activity on larvae of the housefly Musca domestica and has no activity on a panel of expressed neuronal receptors and ion channels. This is Toxin Tbo-IT2 from Tibellus oblongus (Oblong running crab spider).